Here is a 1040-residue protein sequence, read N- to C-terminus: MQVLPPSATGGPSRLFILRPVATTLLMVAILLAGIIGYRFLPVSALPEVDYPTIQVVTLYPGASPDVVTSAITAPLERQFGQMSGLKQMASQSAGGASVVTLQFQLTLPLDVAEQEVQAAINAATNLLPDDLPNPPVYSKVNPADPPIMTLAVTSSALPMTQVEDMVETRVAQRISQVTGVGLVTLSGGQRPAVRVKLNAQALASLGIDSETVRTAITSANVNSAKGSFDGPERAVTLSANDQMKSADEYRNLIIAYKNGAPVRLGDVATVEQGAENAWLGAWANKQPAIVMNVQRQPGANIITTAETIQKLLPQLTESLPKSVQVKVLTDRTTNISASVNDTQFELMLAIALVVMIIYLFLRNIPATIIPAVAVPLSLVGTFAVMVFLDFSINNLTLMALTIATGFVVDDAIVVIENISRYIEKGEKPLAAALKGAGEIGFTIISLTFSLIAVLIPLLFMGDIVGRLFREFAVTLAVAILISAVVSLTLTPMMCARMLSHESLRKQNRFSRASERVINRVIARYGQLLKRVLNHPWLTLGVALGTLALTVLLWIFIPKGFFPVQDNGIIQGTLQAPQSVSFASMAERQRAVADVILKDPAVESLTSFVGVDGTNPSLNSARLQINLKPLDDRDDRVQTVIARLQEAASRVPGATLYLQPIQDLTIDTQVSRTQYQFTLQANSLEALSTWVPKLIARLQTLPQLADVSSDWQDNGLVAYVNVDRASASRLGISMSDVDNALYNAFGQRLISTIYTQANQYRVVLEHNTTATPGLAALDGIRLASSDGGMVPLSAIAKVEQRFGPLTINHLDQFPSTTISFNVPDGYSLGDAVDAITQAEADLAFPAEITTQFQGSTLAFQAALGSTLWLILASVVAMYIVLGVLYESFIHPITILSTLPTAGVGALLALLIAGAELDVIAIIGIILLIGIVKKNAIMMIDFALAAEREQGMTPREAIYQACLLRFRPILMTTLAALLGALPLMLSTGVGAELRRPLGIGMVGGLLVSQVLTLFTTPVIYLLFDRLGHAVRRRLPAREEEA.

12 helical membrane passes run 16-36 (FILR…AGII), 347-367 (LMLA…NIPA), 369-389 (IIPA…MVFL), 396-416 (LTLM…IVVI), 440-460 (IGFT…PLLF), 472-492 (FAVT…TLTP), 537-557 (WLTL…WIFI), 863-883 (LGST…VLGV), 888-908 (FIHP…ALLA), 911-931 (IAGA…IGIV), 968-988 (ILMT…STGV), and 998-1018 (IGMV…TPVI).

Belongs to the resistance-nodulation-cell division (RND) (TC 2.A.6) family. MdtB subfamily. As to quaternary structure, part of a tripartite efflux system composed of MdtA, MdtB and MdtC. MdtB forms a heteromultimer with MdtC.

Its subcellular location is the cell inner membrane. This is Multidrug resistance protein MdtB from Cronobacter sakazakii (strain ATCC BAA-894) (Enterobacter sakazakii).